The sequence spans 971 residues: Sodium/calcium exchanger 1 (971 aa).

The signal sequence occupies residues M1–A32. At D33 to K71 the chain is on the extracellular side. An N-linked (GlcNAc...) asparagine glycan is attached at N41. A helical transmembrane segment spans residues I72–I92. Topologically, residues A93–N133 are cytoplasmic. Residues L134 to C154 traverse the membrane as a helical segment. One copy of the Alpha-1 repeat lies at A138 to I178. Topologically, residues G155 to T167 are extracellular. Residue N157 is glycosylated (N-linked (GlcNAc...) asparagine). The helical transmembrane segment at I168–P188 threads the bilayer. The Cytoplasmic portion of the chain corresponds to D189–F201. A helical membrane pass occupies residues F202–S222. Topologically, residues S223 to E228 are extracellular. A helical transmembrane segment spans residues V229 to A249. Topologically, residues D250–G798 are cytoplasmic. Residues R251 to G270 are putative calmodulin-binding region. A phosphoserine mark is found at S282 and S389. Calx-beta domains lie at V393–S493 and A524–G624. E417, D453, D478, D479, I481, E483, E486, D530, D531, D532, E548, D584, D610, E611, E612, and E716 together coordinate Ca(2+). A helical membrane pass occupies residues W799–L819. Residues A820–H822 are Extracellular-facing. A helical transmembrane segment spans residues F823–T843. Residues A840–V876 form an Alpha-2 repeat. At S844 to N872 the chain is on the cytoplasmic side. The chain crosses the membrane as a helical span at residues A873–A893. Over N894–T904 the chain is Extracellular. The chain crosses the membrane as a helical span at residues L905–Y925. Residues R926–K942 lie on the Cytoplasmic side of the membrane. Residues L943–E963 traverse the membrane as a helical segment. Over A964–F971 the chain is Extracellular.

Belongs to the Ca(2+):cation antiporter (CaCA) (TC 2.A.19) family. SLC8 subfamily. In terms of tissue distribution, detected in heart, brain cortex and hippocampus (at protein level). Cardiac sarcolemma or brain, and spleen. Expressed in all regions of the kidney, highest levels of expression in the distal convoluted tubule. Expressed throughout the CNS, in decreasing order of abundance in hippocampus, cortex, cerebellum, hypothalamus, midbrain and striatum. Expressed in numerous regions of the brain including multiple cortical layers, hippocampus, septal nuclei, thalamic nuclei, cerebellum, hypothalamus, olfactory bulb and brainstem. Also expressed in various regions of the spinal cord, ventricles and atria of the heart, lung, adrenals and kidney. Isoform 4 seems to be a predominant isoform in aorta, stomach, liver, and kidney.

It is found in the cell membrane. The protein resides in the cell projection. The protein localises to the dendrite. The catalysed reaction is Ca(2+)(in) + 3 Na(+)(out) = Ca(2+)(out) + 3 Na(+)(in). Its activity is regulated as follows. Activated by micromolar levels of Ca(2+). Only active at low calcium concentrations. Not activated by PKC. With respect to regulation, active at all calcium levels tested. Activated by PKC. Its activity is regulated as follows. Only active at low calcium concentrations. Activated by PKC. Its function is as follows. Mediates the exchange of one Ca(2+) ion against three to four Na(+) ions across the cell membrane, and thereby contributes to the regulation of cytoplasmic Ca(2+) levels and Ca(2+)-dependent cellular processes. Contributes to Ca(2+) transport during excitation-contraction coupling in muscle. In a first phase, voltage-gated channels mediate the rapid increase of cytoplasmic Ca(2+) levels due to release of Ca(2+) stores from the endoplasmic reticulum. SLC8A1 mediates the export of Ca(2+) from the cell during the next phase, so that cytoplasmic Ca(2+) levels rapidly return to baseline. Required for normal embryonic heart development and the onset of heart contractions. This Rattus norvegicus (Rat) protein is Sodium/calcium exchanger 1 (Slc8a1).